We begin with the raw amino-acid sequence, 218 residues long: MFGFLKKVVDYTRDAADAANYLIQGLAVTFDHLRRRPITVQYPYEKLIPSERYRGRIHYEFDKCIACEVCVRVCPINLPVVDWVMNKETKKKELRNYSIDFGVCIFCGNCVEYCPTNCLSMTEEYELAAYDRHSLNYDNVALGRLPTSVTTDPSVQPLRELAYLPKGVMDPHDVPANQPRAGQLPAEALKSLSLQQESVQGDEGESLQDASDQDQPSG.

4Fe-4S ferredoxin-type domains are found at residues 55–84 (GRIH…VDWV) and 95–124 (RNYS…MTEE). C64, C67, C70, C74, C104, C107, C110, and C114 together coordinate [4Fe-4S] cluster. The segment at 169–218 (MDPHDVPANQPRAGQLPAEALKSLSLQQESVQGDEGESLQDASDQDQPSG) is disordered. Residues 208–218 (QDASDQDQPSG) are compositionally biased toward polar residues.

It belongs to the complex I 23 kDa subunit family. In terms of assembly, NDH-1 is composed of at least 11 different subunits. The cofactor is [4Fe-4S] cluster.

The protein localises to the cellular thylakoid membrane. The catalysed reaction is a plastoquinone + NADH + (n+1) H(+)(in) = a plastoquinol + NAD(+) + n H(+)(out). It catalyses the reaction a plastoquinone + NADPH + (n+1) H(+)(in) = a plastoquinol + NADP(+) + n H(+)(out). In terms of biological role, NDH-1 shuttles electrons from an unknown electron donor, via FMN and iron-sulfur (Fe-S) centers, to quinones in the respiratory and/or the photosynthetic chain. The immediate electron acceptor for the enzyme in this species is believed to be plastoquinone. Couples the redox reaction to proton translocation, and thus conserves the redox energy in a proton gradient. In Prochlorococcus marinus (strain MIT 9313), this protein is NAD(P)H-quinone oxidoreductase subunit I.